The chain runs to 457 residues: Glutamate--tRNA ligase 2 (457 aa).

A 'HIGH' region motif is present at residues 8–18; it reads PSPTGYIHIGN. A 'KMSKS' region motif is present at residues 249-253; the sequence is GFSKR. Residue lysine 252 participates in ATP binding.

This sequence belongs to the class-I aminoacyl-tRNA synthetase family. Glutamate--tRNA ligase type 1 subfamily. As to quaternary structure, monomer.

It is found in the cytoplasm. The enzyme catalyses tRNA(Glu) + L-glutamate + ATP = L-glutamyl-tRNA(Glu) + AMP + diphosphate. Functionally, catalyzes the attachment of glutamate to tRNA(Glu) in a two-step reaction: glutamate is first activated by ATP to form Glu-AMP and then transferred to the acceptor end of tRNA(Glu). This chain is Glutamate--tRNA ligase 2, found in Bartonella tribocorum (strain CIP 105476 / IBS 506).